The following is a 152-amino-acid chain: Orientotoxin-1 (152 aa).

Expressed by the venom gland.

The protein resides in the secreted. The enzyme catalyses a 1-acyl-sn-glycero-3-phosphocholine + H2O = sn-glycerol 3-phosphocholine + a fatty acid + H(+). In terms of biological role, neurotoxin of presynaptic effect which degrades lysophospholipids. The sequence is that of Orientotoxin-1 from Vespa orientalis (Oriental hornet).